The sequence spans 175 residues: Protein CENTRORADIALIS-like (175 aa).

It belongs to the phosphatidylethanolamine-binding protein family. Expressed in tissues surrounding vascular bundles in hypocotyl of 2-week-old plants.

The protein resides in the cytoplasm. May form complexes with phosphorylated ligands by interfering with kinases and their effectors. Can substitute for TERMINAL FLOWER 1 (in vitro). The polypeptide is Protein CENTRORADIALIS-like (CEN) (Arabidopsis thaliana (Mouse-ear cress)).